Consider the following 215-residue polypeptide: tRNA (guanine-N(7)-)-methyltransferase (215 aa).

S-adenosyl-L-methionine contacts are provided by E44, E69, D96, and D118. D118 is an active-site residue. Substrate-binding positions include K122, D154, and 191-194; that span reads TEYE.

It belongs to the class I-like SAM-binding methyltransferase superfamily. TrmB family.

The enzyme catalyses guanosine(46) in tRNA + S-adenosyl-L-methionine = N(7)-methylguanosine(46) in tRNA + S-adenosyl-L-homocysteine. Its pathway is tRNA modification; N(7)-methylguanine-tRNA biosynthesis. Its function is as follows. Catalyzes the formation of N(7)-methylguanine at position 46 (m7G46) in tRNA. The sequence is that of tRNA (guanine-N(7)-)-methyltransferase from Exiguobacterium sp. (strain ATCC BAA-1283 / AT1b).